The following is a 245-amino-acid chain: NAD-dependent protein deacetylase (245 aa).

A Deacetylase sirtuin-type domain is found at 1 to 245 (MIFVQQFEEV…EFVEGLSSMK (245 aa)). NAD(+) contacts are provided by A26, T30, F37, R38, Q105, I107, D108, and H123. F37 is a binding site for nicotinamide. Residues I107 and D108 each coordinate nicotinamide. H123 serves as the catalytic Proton acceptor. 4 residues coordinate Zn(2+): C131, C134, C151, and C154. NAD(+) is bound by residues T190, S191, N216, and I234.

The protein belongs to the sirtuin family. Class U subfamily. Zn(2+) is required as a cofactor.

The protein localises to the cytoplasm. The catalysed reaction is N(6)-acetyl-L-lysyl-[protein] + NAD(+) + H2O = 2''-O-acetyl-ADP-D-ribose + nicotinamide + L-lysyl-[protein]. NAD-dependent protein deacetylase which modulates the activities of several enzymes which are inactive in their acetylated form. In Bacillus cereus (strain ATCC 14579 / DSM 31 / CCUG 7414 / JCM 2152 / NBRC 15305 / NCIMB 9373 / NCTC 2599 / NRRL B-3711), this protein is NAD-dependent protein deacetylase.